A 157-amino-acid chain; its full sequence is Small ribosomal subunit protein uS7 (157 aa).

The protein belongs to the universal ribosomal protein uS7 family. In terms of assembly, part of the 30S ribosomal subunit. Contacts proteins S9 and S11.

Functionally, one of the primary rRNA binding proteins, it binds directly to 16S rRNA where it nucleates assembly of the head domain of the 30S subunit. Is located at the subunit interface close to the decoding center, probably blocks exit of the E-site tRNA. In Psychrobacter sp. (strain PRwf-1), this protein is Small ribosomal subunit protein uS7.